The chain runs to 177 residues: NADH-quinone oxidoreductase subunit B (177 aa).

[4Fe-4S] cluster is bound by residues Cys-56, Cys-57, Cys-121, and Cys-151.

This sequence belongs to the complex I 20 kDa subunit family. NDH-1 is composed of 14 different subunits. Subunits NuoB, C, D, E, F, and G constitute the peripheral sector of the complex. The cofactor is [4Fe-4S] cluster.

It is found in the cell inner membrane. The catalysed reaction is a quinone + NADH + 5 H(+)(in) = a quinol + NAD(+) + 4 H(+)(out). NDH-1 shuttles electrons from NADH, via FMN and iron-sulfur (Fe-S) centers, to quinones in the respiratory chain. The immediate electron acceptor for the enzyme in this species is believed to be ubiquinone. Couples the redox reaction to proton translocation (for every two electrons transferred, four hydrogen ions are translocated across the cytoplasmic membrane), and thus conserves the redox energy in a proton gradient. This Rhodobacter capsulatus (Rhodopseudomonas capsulata) protein is NADH-quinone oxidoreductase subunit B.